The primary structure comprises 193 residues: dCTP deaminase (193 aa).

Residues 110–115, aspartate 128, 136–138, tyrosine 171, lysine 178, and glutamine 182 each bind dCTP; these read RSSLAR and VLE. Glutamate 138 serves as the catalytic Proton donor/acceptor. Residues 173–193 are disordered; that stretch reads KRKNAKYKDQQDAVASRISQD.

This sequence belongs to the dCTP deaminase family. As to quaternary structure, homotrimer.

The catalysed reaction is dCTP + H2O + H(+) = dUTP + NH4(+). Its pathway is pyrimidine metabolism; dUMP biosynthesis; dUMP from dCTP (dUTP route): step 1/2. Functionally, catalyzes the deamination of dCTP to dUTP. This chain is dCTP deaminase, found in Shewanella sp. (strain ANA-3).